The primary structure comprises 1085 residues: Voltage-dependent calcium channel subunit alpha-2/delta-3 (1085 aa).

A signal peptide spans 1–33; the sequence is MAGPGSLCCASRGASALLATALLYAALGDVVRS. Residues 34 to 1062 lie on the Extracellular side of the membrane; it reads EQQIPLSVVK…HPEENARECG (1029 aa). A glycan (N-linked (GlcNAc...) asparagine) is linked at N166. One can recognise a VWFA domain in the interval 256–438; it reads DVVILVDVSG…ENVMEYLHVL (183 aa). The a divalent metal cation site is built by D262, S264, and S266. The short motif at 262–266 is the MIDAS-like motif element; the sequence is DVSGS. An N-linked (GlcNAc...) asparagine glycan is attached at N309. C412 and C1049 form a disulfide bridge. Residues 452-543 form the Cache domain; sequence WTEAYIDSTL…RPLYEEGKKR (92 aa). N-linked (GlcNAc...) asparagine glycosylation is found at N547 and N626. A Phosphotyrosine modification is found at Y918. The helical transmembrane segment at 1063-1083 threads the bilayer; it reads GASSLQAQVALLLLPLVSSLF. The Cytoplasmic segment spans residues 1084–1085; sequence SR.

This sequence belongs to the calcium channel subunit alpha-2/delta family. In terms of assembly, dimer formed of alpha-2-2 and delta-2 chains; disulfide-linked. Voltage-dependent calcium channels are multisubunit complexes, consisting of alpha-1 (CACNA1), alpha-2 (CACNA2D), beta (CACNB) and delta (CACNA2D) subunits in a 1:1:1:1 ratio. N-glycosylated. In terms of processing, may be proteolytically processed into subunits alpha-2-3 and delta-3 that are disulfide-linked. It is however unclear whether such cleavage really takes place in vivo and has a functional role. In terms of tissue distribution, in heart, it is expressed in atrium but not in ventricle.

Its subcellular location is the membrane. The alpha-2/delta subunit of voltage-dependent calcium channels regulates calcium current density and activation/inactivation kinetics of the calcium channel. Acts as a regulatory subunit for P/Q-type calcium channel (CACNA1A), N-type (CACNA1B), L-type (CACNA1C OR CACNA1D) but not T-type (CACNA1G). The chain is Voltage-dependent calcium channel subunit alpha-2/delta-3 (Cacna2d3) from Rattus norvegicus (Rat).